The chain runs to 360 residues: UDP-D-xylose:L-fucose alpha-1,3-D-xylosyltransferase MGP4 (360 aa).

The tract at residues 1-25 (MAQQKFLHQRPIQNPFTNPFSSSPL) is disordered. Residues 1-41 (MAQQKFLHQRPIQNPFTNPFSSSPLSTSSISNRPISLLSRN) are Cytoplasmic-facing. Positions 14–25 (NPFTNPFSSSPL) are enriched in low complexity. A helical; Signal-anchor for type II membrane protein membrane pass occupies residues 42 to 62 (GLLLLLALLVILGVFLPWAGS). At 63–360 (PLFPSPNKLS…ASESPLGKLE (298 aa)) the chain is on the lumenal side. Residues asparagine 93 and asparagine 168 are each glycosylated (N-linked (GlcNAc...) asparagine). The DXD motif motif lies at 191–193 (DVD). Asparagine 285 and asparagine 310 each carry an N-linked (GlcNAc...) asparagine glycan.

It belongs to the glycosyltransferase 77 family. Mn(2+) is required as a cofactor. The cofactor is Mg(2+). Widely expressed.

Its subcellular location is the golgi apparatus membrane. Catalyzes the transfer of D-xylose from UDP-alpha-D-xylose onto L-fucose. Probably involved in the biosynthesis of rhamnogalacturonan II (RG-II) through xylosylation of the internal fucose moiety of the A-chain of RG-II, a structurally complex pectic polysaccharide of the primary cell wall. RG-II is essential for the cell wall integrity of rapidly growing tissues such as roots and pollen tube growth and elongation. In Arabidopsis thaliana (Mouse-ear cress), this protein is UDP-D-xylose:L-fucose alpha-1,3-D-xylosyltransferase MGP4.